The sequence spans 497 residues: MNLRELLTAAAITPGFEHPALNQEVKSLRMNSWECEPGSLFIGMPGTRVEGGNFWPSALAAGAIAAVVSPQAKPREGEACVIVVPDIERACGRLAAAFYNYPSQHLSLLGVTGTNGKTTTTHLVEHLLNRVGYPTALLGTLYSRWPGHCEVASHTTPFAVTLQEQLAAAVDAGCRFGVMEVSSHALAQDRVWGCQFEVAAFTNLTQDHLDYHRDLEDYFAAKAKLFTADYLKGRAILNGDDPFGQRLAQQLPRDRYWTYGLSKDADFRAENLNYRSNGVTGAVHTPLGSGTLDSPLVGQFNVANVLAAIAMGAAVGLPLEAMLNALRDFPGVPGRMEQVRLDPEQDITVVVDYAHTPDSLENLLRAARPFIPGKLICVFGCGGDRDRSKRPQMGAIAARLADQVVVTSDNPRTENPQRILDDILAGIPPETAMIVEGDRRQAILQAILTAAPGDGVIIAGKGHEDYQILGTEKVHFDDREEARNALKERLKQPLQRG.

Residue Ser-32 coordinates UDP-N-acetyl-alpha-D-muramoyl-L-alanyl-D-glutamate. Position 113 to 119 (113 to 119 (GTNGKTT)) interacts with ATP. UDP-N-acetyl-alpha-D-muramoyl-L-alanyl-D-glutamate contacts are provided by residues 155–156 (TT), Ser-182, Gln-188, and Arg-190. Lys-222 carries the N6-carboxylysine modification. Meso-2,6-diaminopimelate contacts are provided by residues Arg-385, 409–412 (DNPR), Gly-460, and Glu-464. The Meso-diaminopimelate recognition motif motif lies at 409 to 412 (DNPR).

This sequence belongs to the MurCDEF family. MurE subfamily. The cofactor is Mg(2+). In terms of processing, carboxylation is probably crucial for Mg(2+) binding and, consequently, for the gamma-phosphate positioning of ATP.

It localises to the cytoplasm. The catalysed reaction is UDP-N-acetyl-alpha-D-muramoyl-L-alanyl-D-glutamate + meso-2,6-diaminopimelate + ATP = UDP-N-acetyl-alpha-D-muramoyl-L-alanyl-gamma-D-glutamyl-meso-2,6-diaminopimelate + ADP + phosphate + H(+). The protein operates within cell wall biogenesis; peptidoglycan biosynthesis. Functionally, catalyzes the addition of meso-diaminopimelic acid to the nucleotide precursor UDP-N-acetylmuramoyl-L-alanyl-D-glutamate (UMAG) in the biosynthesis of bacterial cell-wall peptidoglycan. The polypeptide is UDP-N-acetylmuramoyl-L-alanyl-D-glutamate--2,6-diaminopimelate ligase (Thermosynechococcus vestitus (strain NIES-2133 / IAM M-273 / BP-1)).